The primary structure comprises 181 residues: Small acidic protein (181 aa).

The interval 1–181 (MSAARESHPH…KMMFVKSSGS (181 aa)) is disordered. K13 is covalently cross-linked (Glycyl lysine isopeptide (Lys-Gly) (interchain with G-Cter in SUMO2)). A phosphoserine mark is found at S15 and S17. Basic and acidic residues predominate over residues 48 to 78 (GKKEHTGRLVIGDHKSTSHFRTGEEDKKINE). A Glycyl lysine isopeptide (Lys-Gly) (interchain with G-Cter in SUMO2) cross-link involves residue K62. Phosphoserine is present on S63. Residue K75 forms a Glycyl lysine isopeptide (Lys-Gly) (interchain with G-Cter in SUMO2) linkage. Phosphoserine occurs at positions 87, 125, and 145. A compositionally biased stretch (acidic residues) spans 106–147 (EVDDHDGEGDVAGDDDDDDSPDPESPDDSESDSESEKEESTE). A compositionally biased stretch (basic and acidic residues) spans 151–169 (AAEHPDEVEDSKNKKDAKS). N6-acetyllysine is present on residues K172 and K177.

Belongs to the SMAP family.

This chain is Small acidic protein (SMAP), found in Bos taurus (Bovine).